A 292-amino-acid chain; its full sequence is Protease HtpX (292 aa).

2 consecutive transmembrane segments (helical) span residues I5–V25 and S34–L54. Residue H140 coordinates Zn(2+). The active site involves E141. H144 is a binding site for Zn(2+). The next 2 helical transmembrane spans lie at L155–I175 and I193–F213. Residue E218 coordinates Zn(2+).

This sequence belongs to the peptidase M48B family. It depends on Zn(2+) as a cofactor.

The protein localises to the cell inner membrane. This is Protease HtpX from Xanthomonas oryzae pv. oryzae (strain MAFF 311018).